The sequence spans 328 residues: Methionyl-tRNA formyltransferase (328 aa).

(6S)-5,6,7,8-tetrahydrofolate is bound at residue 110-113; it reads SLLP.

The protein belongs to the Fmt family.

It catalyses the reaction L-methionyl-tRNA(fMet) + (6R)-10-formyltetrahydrofolate = N-formyl-L-methionyl-tRNA(fMet) + (6S)-5,6,7,8-tetrahydrofolate + H(+). Functionally, attaches a formyl group to the free amino group of methionyl-tRNA(fMet). The formyl group appears to play a dual role in the initiator identity of N-formylmethionyl-tRNA by promoting its recognition by IF2 and preventing the misappropriation of this tRNA by the elongation apparatus. This is Methionyl-tRNA formyltransferase from Prochlorococcus marinus (strain MIT 9312).